The sequence spans 62 residues: Pelophylaxin-4 (62 aa).

A signal peptide spans 1–22 (MLTLKKSMLLIFFLGTINFSLC). The propeptide occupies 23 to 45 (EQERNADEEERRDEPEERDVEVQ). Leucine amide is present on Leu60. Gly61 is a propeptide.

In terms of tissue distribution, expressed by the skin glands.

It localises to the secreted. Antimicrobial peptide. The sequence is that of Pelophylaxin-4 from Pelophylax fukienensis (Fukien gold-striped pond frog).